Here is a 116-residue protein sequence, read N- to C-terminus: Large-conductance mechanosensitive channel (116 aa).

2 helical membrane passes run 7–27 and 64–84; these read EFALKGNVLDLAIAVVMGAAF and GLFIQSIIDFIIIAFALFIFV.

This sequence belongs to the MscL family. As to quaternary structure, homopentamer.

It localises to the cell membrane. Functionally, channel that opens in response to stretch forces in the membrane lipid bilayer. May participate in the regulation of osmotic pressure changes within the cell. This Staphylococcus epidermidis (strain ATCC 35984 / DSM 28319 / BCRC 17069 / CCUG 31568 / BM 3577 / RP62A) protein is Large-conductance mechanosensitive channel.